A 476-amino-acid chain; its full sequence is Aspartyl/glutamyl-tRNA(Asn/Gln) amidotransferase subunit B (476 aa).

The protein belongs to the GatB/GatE family. GatB subfamily. Heterotrimer of A, B and C subunits.

It catalyses the reaction L-glutamyl-tRNA(Gln) + L-glutamine + ATP + H2O = L-glutaminyl-tRNA(Gln) + L-glutamate + ADP + phosphate + H(+). It carries out the reaction L-aspartyl-tRNA(Asn) + L-glutamine + ATP + H2O = L-asparaginyl-tRNA(Asn) + L-glutamate + ADP + phosphate + 2 H(+). Allows the formation of correctly charged Asn-tRNA(Asn) or Gln-tRNA(Gln) through the transamidation of misacylated Asp-tRNA(Asn) or Glu-tRNA(Gln) in organisms which lack either or both of asparaginyl-tRNA or glutaminyl-tRNA synthetases. The reaction takes place in the presence of glutamine and ATP through an activated phospho-Asp-tRNA(Asn) or phospho-Glu-tRNA(Gln). This chain is Aspartyl/glutamyl-tRNA(Asn/Gln) amidotransferase subunit B, found in Lactobacillus helveticus (strain DPC 4571).